The following is a 144-amino-acid chain: Large ribosomal subunit protein uL15 (144 aa).

Residues 1-53 (MRLNTLSPAEGAKHAPKRVGRGIGSGLGKTGGRGHKGQKSRSGGGVRRGFEGG) are disordered. Residues 21–31 (RGIGSGLGKTG) show a composition bias toward gly residues.

Belongs to the universal ribosomal protein uL15 family. In terms of assembly, part of the 50S ribosomal subunit.

In terms of biological role, binds to the 23S rRNA. In Proteus mirabilis (strain HI4320), this protein is Large ribosomal subunit protein uL15.